Here is a 152-residue protein sequence, read N- to C-terminus: Putative pseudoazurin (152 aa).

A signal peptide spans 1 to 23 (MPLKFGLIVATAALIASAASLMA). The Plastocyanin-like domain occupies 28–116 (VQMLNKGTDG…MGMVALIQVG (89 aa)). 4 residues coordinate Cu cation: histidine 63, cysteine 101, histidine 104, and methionine 109.

Cu cation serves as cofactor.

The protein resides in the periplasm. This soluble electron transfer copper protein is required for the inactivation of copper-containing nitrite reductase in the presence of oxygen. This Rhizobium leguminosarum bv. viciae protein is Putative pseudoazurin (azu).